A 417-amino-acid polypeptide reads, in one-letter code: UDP-N-acetylglucosamine 1-carboxyvinyltransferase (417 aa).

Residue 22–23 (KN) coordinates phosphoenolpyruvate. R91 serves as a coordination point for UDP-N-acetyl-alpha-D-glucosamine. The Proton donor role is filled by C115. At C115 the chain carries 2-(S-cysteinyl)pyruvic acid O-phosphothioketal. UDP-N-acetyl-alpha-D-glucosamine is bound by residues 120 to 124 (RPVDL), D304, and I326.

The protein belongs to the EPSP synthase family. MurA subfamily.

It is found in the cytoplasm. The enzyme catalyses phosphoenolpyruvate + UDP-N-acetyl-alpha-D-glucosamine = UDP-N-acetyl-3-O-(1-carboxyvinyl)-alpha-D-glucosamine + phosphate. The protein operates within cell wall biogenesis; peptidoglycan biosynthesis. Cell wall formation. Adds enolpyruvyl to UDP-N-acetylglucosamine. This is UDP-N-acetylglucosamine 1-carboxyvinyltransferase from Nitratidesulfovibrio vulgaris (strain DP4) (Desulfovibrio vulgaris).